The primary structure comprises 307 residues: tRNA pseudouridine synthase B (307 aa).

The active-site Nucleophile is the D39.

Belongs to the pseudouridine synthase TruB family. Type 1 subfamily.

It carries out the reaction uridine(55) in tRNA = pseudouridine(55) in tRNA. Responsible for synthesis of pseudouridine from uracil-55 in the psi GC loop of transfer RNAs. This is tRNA pseudouridine synthase B from Lactiplantibacillus plantarum (strain ATCC BAA-793 / NCIMB 8826 / WCFS1) (Lactobacillus plantarum).